The primary structure comprises 376 residues: Lipid-A-disaccharide synthase (376 aa).

This sequence belongs to the LpxB family.

It catalyses the reaction a lipid X + a UDP-2-N,3-O-bis[(3R)-3-hydroxyacyl]-alpha-D-glucosamine = a lipid A disaccharide + UDP + H(+). The protein operates within bacterial outer membrane biogenesis; LPS lipid A biosynthesis. In terms of biological role, condensation of UDP-2,3-diacylglucosamine and 2,3-diacylglucosamine-1-phosphate to form lipid A disaccharide, a precursor of lipid A, a phosphorylated glycolipid that anchors the lipopolysaccharide to the outer membrane of the cell. The polypeptide is Lipid-A-disaccharide synthase (Coxiella burnetii (strain RSA 331 / Henzerling II)).